The primary structure comprises 344 residues: NADH-ubiquinone oxidoreductase chain 2 (344 aa).

Transmembrane regions (helical) follow at residues 1 to 21 (MNPLALTIFLLSLAIGTTITL), 24 to 44 (FHWLLAWIGLEINTLAIIPLM), 59 to 79 (YFLTQAAASALVLFSSLISAW), 94 to 114 (MNILSIALMMKLGLAPLHFWI), 121 to 141 (ISLPTGLILSTWQKIAPMALL), 150 to 170 (LNLTIALGLTSIMVGGWGGIG), 177 to 197 (IMAFSSIGHLGWIIVILKFDP), 201 to 221 (LLNFVLYIIMTAAMFMSLTTI), 245 to 265 (LILLSLAGLPPLTGFTPKLLI), 273 to 293 (NATLLAVMVMFISLLALFFYI), and 324 to 344 (TAIMNTMALILLPITPTLLLL).

Belongs to the complex I subunit 2 family.

Its subcellular location is the mitochondrion inner membrane. The catalysed reaction is a ubiquinone + NADH + 5 H(+)(in) = a ubiquinol + NAD(+) + 4 H(+)(out). Core subunit of the mitochondrial membrane respiratory chain NADH dehydrogenase (Complex I) that is believed to belong to the minimal assembly required for catalysis. Complex I functions in the transfer of electrons from NADH to the respiratory chain. The immediate electron acceptor for the enzyme is believed to be ubiquinone. This chain is NADH-ubiquinone oxidoreductase chain 2 (MT-ND2), found in Aquarana catesbeiana (American bullfrog).